A 349-amino-acid polypeptide reads, in one-letter code: Anthranilate phosphoribosyltransferase (349 aa).

Residues G82, 85–86 (GD), 92–95 (NVSS), 110–118 (KHGNRAVSG), and S122 contribute to the 5-phospho-alpha-D-ribose 1-diphosphate site. G82 provides a ligand contact to anthranilate. S94 serves as a coordination point for Mg(2+). An anthranilate-binding site is contributed by N113. R168 provides a ligand contact to anthranilate. Residues D227 and E228 each contribute to the Mg(2+) site.

Belongs to the anthranilate phosphoribosyltransferase family. As to quaternary structure, homodimer. The cofactor is Mg(2+).

The catalysed reaction is N-(5-phospho-beta-D-ribosyl)anthranilate + diphosphate = 5-phospho-alpha-D-ribose 1-diphosphate + anthranilate. The protein operates within amino-acid biosynthesis; L-tryptophan biosynthesis; L-tryptophan from chorismate: step 2/5. Catalyzes the transfer of the phosphoribosyl group of 5-phosphorylribose-1-pyrophosphate (PRPP) to anthranilate to yield N-(5'-phosphoribosyl)-anthranilate (PRA). The protein is Anthranilate phosphoribosyltransferase of Pseudomonas aeruginosa (strain LESB58).